A 266-amino-acid polypeptide reads, in one-letter code: Zinc transporter ZupT (266 aa).

The next 8 membrane-spanning stretches (helical) occupy residues 8–28 (LLLT…ALVV), 35–55 (FLTL…FVEL), 70–90 (QAAA…IWAI), 123–143 (GLFT…AVFF), 152–172 (GIVI…AIAV), 185–205 (FTYS…GFAI), 209–229 (WLSP…MVYI), and 246–266 (LAIS…LLLA). Positions 134 and 137 each coordinate Fe(2+). Glutamate 137 and histidine 162 together coordinate Zn(2+). Fe(2+)-binding residues include asparagine 163, glutamate 166, and glutamate 195. Residue glutamate 166 coordinates Zn(2+).

Belongs to the ZIP transporter (TC 2.A.5) family. ZupT subfamily.

It is found in the cell membrane. The enzyme catalyses Zn(2+)(in) = Zn(2+)(out). Its function is as follows. Mediates zinc uptake. May also transport other divalent cations. This chain is Zinc transporter ZupT, found in Chlorobium phaeovibrioides (strain DSM 265 / 1930) (Prosthecochloris vibrioformis (strain DSM 265)).